The sequence spans 148 residues: Cystatin-C (148 aa).

An N-terminal signal peptide occupies residues 1–30; that stretch reads MVGSPRAPLLLLASLIVALALALAVSPAAA. A Pyrrolidone carboxylic acid modification is found at glutamine 31. A Secondary area of contact motif is present at residues 84–88; that stretch reads QVVSG. Intrachain disulfides connect cysteine 102–cysteine 112 and cysteine 126–cysteine 146.

The protein localises to the secreted. In terms of biological role, this is a thiol proteinase inhibitor. The protein is Cystatin-C (CST3) of Bos taurus (Bovine).